Reading from the N-terminus, the 491-residue chain is Transcription factor AP-2-alpha (491 aa).

Residues 74-161 (GASNGTARLP…GQRQSQESGL (88 aa)) are disordered. The short motif at 111-116 (YFPPPY) is the PPxY motif element. 2 stretches are compositionally biased toward low complexity: residues 119–128 (IYPQSQDPYS) and 142–155 (QPQPQHPGWPGQRQ). Residues K231 and K238 each participate in a glycyl lysine isopeptide (Lys-Gly) (interchain with G-Cter in SUMO2) cross-link. S293 carries the phosphoserine; by PKA modification. Residues 334–464 (RRKAANVTLL…YLTEALKAMD (131 aa)) are H-S-H (helix-span-helix), dimerization. Polar residues predominate over residues 468 to 481 (LSNNPNSHTDNSAK). The disordered stretch occupies residues 468 to 491 (LSNNPNSHTDNSAKSSDKEEKHRK). The span at 482 to 491 (SSDKEEKHRK) shows a compositional bias: basic and acidic residues.

Belongs to the AP-2 family. In terms of assembly, binds DNA as a dimer. Can form homodimers or heterodimers with other AP-2 family members. Interacts with WWOX. Interacts with CITED4. Interacts with UBE2I. Interacts with RALBP1 in a complex also containing EPN1 and NUMB during interphase and mitosis. Interacts with KCTD1; this interaction represses transcription activation. Interacts (via C-terminus) with CITED2 (via C-terminus); the interaction stimulates TFAP2A-transcriptional activation. Interacts (via N-terminus) with EP300 (via N-terminus); the interaction requires CITED2. Interacts with KCTD15; this interaction inhibits TFAP2A transcriptional activation.

The protein resides in the nucleus. Functionally, sequence-specific DNA-binding protein that interacts with inducible viral and cellular enhancer elements to regulate transcription of selected genes. AP-2 factors bind to the consensus sequence 5'-GCCNNNGGC-3' and activate genes involved in a large spectrum of important biological functions including proper eye, face, body wall, limb and neural tube development. They also suppress a number of genes including MCAM/MUC18, C/EBP alpha and MYC. AP-2-alpha is the only AP-2 protein required for early morphogenesis of the lens vesicle. Together with the CITED2 coactivator, stimulates the PITX2 P1 promoter transcription activation. Associates with chromatin to the PITX2 P1 promoter region. This chain is Transcription factor AP-2-alpha (TFAP2A), found in Ovis aries (Sheep).